We begin with the raw amino-acid sequence, 234 residues long: R-spondin-4 (234 aa).

Residues 1–19 form the signal peptide; it reads MRAPLCLLLLVAHAVDMLA. An N-linked (GlcNAc...) asparagine glycan is attached at asparagine 34. 11 cysteine pairs are disulfide-bonded: cysteine 35–cysteine 41, cysteine 38–cysteine 47, cysteine 50–cysteine 69, cysteine 73–cysteine 88, cysteine 91–cysteine 98, cysteine 95–cysteine 104, cysteine 107–cysteine 118, cysteine 122–cysteine 135, cysteine 139–cysteine 181, cysteine 150–cysteine 157, and cysteine 190–cysteine 196. The FU repeat unit spans residues 85–128; the sequence is VNRCKKCGATCESCFSQDFCIRCKRQFYLYKGKCLPTCPPGTLA. Positions 138-197 constitute a TSP type-1 domain; sequence ECELGPWGGWSPCTHNGKTCGSAWGLESRVREAGRAGHEEAATCQVLSESRKCPIQRPCP. A disordered region spans residues 190–234; that stretch reads CPIQRPCPGERSPGQKKGRKDRRPRKDRKLDRRLDVRPRQPGLQP. Basic residues predominate over residues 203–216; sequence GQKKGRKDRRPRKD. A compositionally biased stretch (basic and acidic residues) spans 217–227; that stretch reads RKLDRRLDVRP.

Belongs to the R-spondin family. In terms of assembly, binds heparin. Interacts with LGR4, LGR5 and LGR6. Post-translationally, tyr-112 may be phosphorylated; however as this position is probably extracellular, the vivo relevance is not proven.

The protein resides in the secreted. Its function is as follows. Activator of the canonical Wnt signaling pathway by acting as a ligand for LGR4-6 receptors. Upon binding to LGR4-6 (LGR4, LGR5 or LGR6), LGR4-6 associate with phosphorylated LRP6 and frizzled receptors that are activated by extracellular Wnt receptors, triggering the canonical Wnt signaling pathway to increase expression of target genes. Also regulates the canonical Wnt/beta-catenin-dependent pathway and non-canonical Wnt signaling by acting as an inhibitor of ZNRF3, an important regulator of the Wnt signaling pathway. This chain is R-spondin-4 (RSPO4), found in Homo sapiens (Human).